Reading from the N-terminus, the 296-residue chain is 4-hydroxy-tetrahydrodipicolinate synthase (296 aa).

Position 47 (T47) interacts with pyruvate. Y135 functions as the Proton donor/acceptor in the catalytic mechanism. Catalysis depends on K164, which acts as the Schiff-base intermediate with substrate. Position 207 (I207) interacts with pyruvate.

The protein belongs to the DapA family. In terms of assembly, homotetramer; dimer of dimers.

The protein localises to the cytoplasm. The catalysed reaction is L-aspartate 4-semialdehyde + pyruvate = (2S,4S)-4-hydroxy-2,3,4,5-tetrahydrodipicolinate + H2O + H(+). The protein operates within amino-acid biosynthesis; L-lysine biosynthesis via DAP pathway; (S)-tetrahydrodipicolinate from L-aspartate: step 3/4. Its function is as follows. Catalyzes the condensation of (S)-aspartate-beta-semialdehyde [(S)-ASA] and pyruvate to 4-hydroxy-tetrahydrodipicolinate (HTPA). This Karelsulcia muelleri (strain GWSS) (Sulcia muelleri) protein is 4-hydroxy-tetrahydrodipicolinate synthase.